Reading from the N-terminus, the 101-residue chain is Small ribosomal subunit protein eS24 (101 aa).

Belongs to the eukaryotic ribosomal protein eS24 family.

This chain is Small ribosomal subunit protein eS24, found in Methanosarcina barkeri (strain Fusaro / DSM 804).